The chain runs to 202 residues: Probable chemoreceptor glutamine deamidase CheD 2 (202 aa).

This sequence belongs to the CheD family.

The catalysed reaction is L-glutaminyl-[protein] + H2O = L-glutamyl-[protein] + NH4(+). In terms of biological role, probably deamidates glutamine residues to glutamate on methyl-accepting chemotaxis receptors (MCPs), playing an important role in chemotaxis. The sequence is that of Probable chemoreceptor glutamine deamidase CheD 2 from Shewanella oneidensis (strain ATCC 700550 / JCM 31522 / CIP 106686 / LMG 19005 / NCIMB 14063 / MR-1).